Here is a 954-residue protein sequence, read N- to C-terminus: Isoleucine--tRNA ligase (954 aa).

Residues 58 to 68 (PYANGDIHIGH) carry the 'HIGH' region motif. Glutamate 572 provides a ligand contact to L-isoleucyl-5'-AMP. A 'KMSKS' region motif is present at residues 613–617 (KMSKS). Lysine 616 contacts ATP. Zn(2+) contacts are provided by cysteine 917, cysteine 920, cysteine 937, and cysteine 940.

It belongs to the class-I aminoacyl-tRNA synthetase family. IleS type 1 subfamily. As to quaternary structure, monomer. Zn(2+) serves as cofactor.

It localises to the cytoplasm. The catalysed reaction is tRNA(Ile) + L-isoleucine + ATP = L-isoleucyl-tRNA(Ile) + AMP + diphosphate. In terms of biological role, catalyzes the attachment of isoleucine to tRNA(Ile). As IleRS can inadvertently accommodate and process structurally similar amino acids such as valine, to avoid such errors it has two additional distinct tRNA(Ile)-dependent editing activities. One activity is designated as 'pretransfer' editing and involves the hydrolysis of activated Val-AMP. The other activity is designated 'posttransfer' editing and involves deacylation of mischarged Val-tRNA(Ile). This is Isoleucine--tRNA ligase from Photobacterium profundum (strain SS9).